The following is a 135-amino-acid chain: Protein Wnt-7c (135 aa).

2 cysteine pairs are disulfide-bonded: cysteine 3-cysteine 17 and cysteine 5-cysteine 12. Residue serine 9 is the site of O-palmitoleoyl serine; by PORCN attachment. N-linked (GlcNAc...) asparagine glycans are attached at residues asparagine 62, asparagine 85, and asparagine 98. Disulfide bonds link cysteine 81-cysteine 112, cysteine 97-cysteine 107, and cysteine 134-cysteine 135.

It belongs to the Wnt family. Post-translationally, palmitoleoylation is required for efficient binding to frizzled receptors. Depalmitoleoylation leads to Wnt signaling pathway inhibition.

It is found in the secreted. The protein resides in the extracellular space. Its subcellular location is the extracellular matrix. Ligand for members of the frizzled family of seven transmembrane receptors. Probable developmental protein. May be a signaling molecule which affects the development of discrete regions of tissues. Is likely to signal over only few cell diameters. This Xenopus laevis (African clawed frog) protein is Protein Wnt-7c (wnt7c).